Reading from the N-terminus, the 188-residue chain is Elongation factor P (188 aa).

Lysine 34 is subject to N6-(3,6-diaminohexanoyl)-5-hydroxylysine.

The protein belongs to the elongation factor P family. In terms of processing, may be beta-lysylated on the epsilon-amino group of Lys-34 by the combined action of EpmA and EpmB, and then hydroxylated on the C5 position of the same residue by EpmC (if this protein is present). Lysylation is critical for the stimulatory effect of EF-P on peptide-bond formation. The lysylation moiety may extend toward the peptidyltransferase center and stabilize the terminal 3-CCA end of the tRNA. Hydroxylation of the C5 position on Lys-34 may allow additional potential stabilizing hydrogen-bond interactions with the P-tRNA.

The protein localises to the cytoplasm. It participates in protein biosynthesis; polypeptide chain elongation. Functionally, involved in peptide bond synthesis. Alleviates ribosome stalling that occurs when 3 or more consecutive Pro residues or the sequence PPG is present in a protein, possibly by augmenting the peptidyl transferase activity of the ribosome. Modification of Lys-34 is required for alleviation. This is Elongation factor P from Yersinia pseudotuberculosis serotype O:1b (strain IP 31758).